The sequence spans 297 residues: uncharacterized protein (297 aa).

3 disordered regions span residues 19–133, 147–214, and 226–277; these read NEVD…EEKE, AEDD…VGIA, and EKTS…SKEA. A compositionally biased stretch (basic and acidic residues) spans 41–52; it reads EEPKNEKEKHDD. Residues 77–87 are compositionally biased toward acidic residues; that stretch reads PAEDDEEDEEF. Residues 88–101 are compositionally biased toward polar residues; sequence PSQSYGPSIPSNFR. Composition is skewed to basic and acidic residues over residues 147 to 161 and 236 to 268; these read AEDDEKNFQPKREEW and IHQKKRDEKVKDAGYAQGERRPFDREKDMEVRG.

This is an uncharacterized protein from Caenorhabditis elegans.